Consider the following 209-residue polypeptide: Translation initiation factor 2 subunit beta (209 aa).

The region spanning 144-202 is the TRAM domain; that stretch reads TIEEGKEYVVEITEVGSSGEGRTNYKGYTIFVPGAKRGETVKVRIKKVKNDVAIGEIIE.

It belongs to the eIF-2-beta/eIF-5 family. As to quaternary structure, heterotrimer composed of an alpha, a beta and a gamma chain.

EIF-2 functions in the early steps of protein synthesis by forming a ternary complex with GTP and initiator tRNA. This is Translation initiation factor 2 subunit beta (eif2b) from Thermoplasma acidophilum (strain ATCC 25905 / DSM 1728 / JCM 9062 / NBRC 15155 / AMRC-C165).